We begin with the raw amino-acid sequence, 159 residues long: MKIRILTIGQKMPAWVLTGFEDYFKRIQPFVQTQVIELPMAKRGKNDSEADILKYCQIEGESILNALKPNETLIALEVGGRELSTEKLADTMKQWMLEGNDVALAIGGPDGLSDQVRKAAAWHWSLSKLTMPHPLVRILLIEQLYRAMSINHNHPYHRA.

Residues Leu76, Gly107, and 126–131 each bind S-adenosyl-L-methionine; that span reads LSKLTM.

This sequence belongs to the RNA methyltransferase RlmH family. In terms of assembly, homodimer.

The protein resides in the cytoplasm. It catalyses the reaction pseudouridine(1915) in 23S rRNA + S-adenosyl-L-methionine = N(3)-methylpseudouridine(1915) in 23S rRNA + S-adenosyl-L-homocysteine + H(+). In terms of biological role, specifically methylates the pseudouridine at position 1915 (m3Psi1915) in 23S rRNA. This is Ribosomal RNA large subunit methyltransferase H from Acinetobacter baumannii (strain AB307-0294).